The sequence spans 300 residues: Sulfate adenylyltransferase subunit 2 (300 aa).

A disordered region spans residues 281–300 (RAIDRDEAGSMEKKKREGYF).

It belongs to the PAPS reductase family. CysD subfamily. Heterodimer composed of CysD, the smaller subunit, and CysN.

The catalysed reaction is sulfate + ATP + H(+) = adenosine 5'-phosphosulfate + diphosphate. The protein operates within sulfur metabolism; hydrogen sulfide biosynthesis; sulfite from sulfate: step 1/3. In terms of biological role, with CysN forms the ATP sulfurylase (ATPS) that catalyzes the adenylation of sulfate producing adenosine 5'-phosphosulfate (APS) and diphosphate, the first enzymatic step in sulfur assimilation pathway. APS synthesis involves the formation of a high-energy phosphoric-sulfuric acid anhydride bond driven by GTP hydrolysis by CysN coupled to ATP hydrolysis by CysD. This chain is Sulfate adenylyltransferase subunit 2, found in Brucella melitensis biotype 2 (strain ATCC 23457).